Here is a 372-residue protein sequence, read N- to C-terminus: F-box/kelch-repeat protein At4g14905 (372 aa).

An F-box domain is found at 34-74; it reads LHDEIAVSCFARVPRCYYPAISLVCRNFRRLMASPEIYIER. 3 Kelch repeats span residues 137-183, 184-229, and 232-280; these read ETYV…LIDG, KLYV…FFVM, and KIYR…CMNQ.

In Arabidopsis thaliana (Mouse-ear cress), this protein is F-box/kelch-repeat protein At4g14905.